We begin with the raw amino-acid sequence, 253 residues long: Geranylgeranylglyceryl phosphate synthase (253 aa).

Residues aspartate 28 and serine 53 each coordinate Mg(2+). Residues 172-178, 203-204, and 225-226 each bind sn-glycerol 1-phosphate; these read YLEAGSG, GG, and GN.

This sequence belongs to the GGGP/HepGP synthase family. Group II subfamily. Mg(2+) is required as a cofactor.

It is found in the cytoplasm. It catalyses the reaction sn-glycerol 1-phosphate + (2E,6E,10E)-geranylgeranyl diphosphate = sn-3-O-(geranylgeranyl)glycerol 1-phosphate + diphosphate. It functions in the pathway membrane lipid metabolism; glycerophospholipid metabolism. Its function is as follows. Prenyltransferase that catalyzes the transfer of the geranylgeranyl moiety of geranylgeranyl diphosphate (GGPP) to the C3 hydroxyl of sn-glycerol-1-phosphate (G1P). This reaction is the first ether-bond-formation step in the biosynthesis of archaeal membrane lipids. The protein is Geranylgeranylglyceryl phosphate synthase of Methanocaldococcus jannaschii (strain ATCC 43067 / DSM 2661 / JAL-1 / JCM 10045 / NBRC 100440) (Methanococcus jannaschii).